A 488-amino-acid polypeptide reads, in one-letter code: Probable glycine dehydrogenase (decarboxylating) subunit 2 (488 aa).

Position 274 is an N6-(pyridoxal phosphate)lysine (K274).

The protein belongs to the GcvP family. C-terminal subunit subfamily. The glycine cleavage system is composed of four proteins: P, T, L and H. In this organism, the P 'protein' is a heterodimer of two subunits. It depends on pyridoxal 5'-phosphate as a cofactor.

It catalyses the reaction N(6)-[(R)-lipoyl]-L-lysyl-[glycine-cleavage complex H protein] + glycine + H(+) = N(6)-[(R)-S(8)-aminomethyldihydrolipoyl]-L-lysyl-[glycine-cleavage complex H protein] + CO2. The glycine cleavage system catalyzes the degradation of glycine. The P protein binds the alpha-amino group of glycine through its pyridoxal phosphate cofactor; CO(2) is released and the remaining methylamine moiety is then transferred to the lipoamide cofactor of the H protein. This Listeria welshimeri serovar 6b (strain ATCC 35897 / DSM 20650 / CCUG 15529 / CIP 8149 / NCTC 11857 / SLCC 5334 / V8) protein is Probable glycine dehydrogenase (decarboxylating) subunit 2.